A 521-amino-acid polypeptide reads, in one-letter code: Sodium/hydrogen exchanger 5 (521 aa).

The Cytoplasmic segment spans residues 1–23; that stretch reads MEEVMISPVEHDPQGQVKQQQAA. Residues 24-44 form a helical membrane-spanning segment; the sequence is GVGILLQIMMLVLSFVLGHVL. At 45–48 the chain is on the lumenal side; that stretch reads RRHR. The chain crosses the membrane as a helical span at residues 49 to 69; the sequence is FHYLPEASGSLLIGLIVGILA. Over 70-86 the chain is Cytoplasmic; the sequence is NISDTETSIRTWFNFHE. The helical intramembrane region spans 87-107; it reads EFFFLFLLPPIIFQSGFSLQP. The Cytoplasmic portion of the chain corresponds to 108-115; that stretch reads KPFFSNFG. A helical transmembrane segment spans residues 116–136; that stretch reads AIVTFAIIGTFVASVVTGGLV. Residues 137-141 are Lumenal-facing; that stretch reads YLGGS. Intramembrane regions (helical) lie at residues 142–162 and 166–186; these read MYLMYKLPFVECLMFGALISA and VTVLSIFQDVGTDVNLYALVF. Topologically, residues 187–222 are lumenal; it reads GESVLNDAMAISLYRTMSLVNRQSSSGEHFFMVVIR. A helical membrane pass occupies residues 223-243; that stretch reads FFETFAGSMSAGVGVGFTSAL. Topologically, residues 244-271 are cytoplasmic; sequence LFKYAGLDTENLQNLECCLFVLFPYFSY. A helical membrane pass occupies residues 272–292; the sequence is MLAEGVGLSGIVSILFTGIVM. Residues 293–310 are Lumenal-facing; the sequence is KRYTFSNLSEASQSFVSS. Residue N299 is glycosylated (N-linked (GlcNAc...) asparagine). Residues 311–331 form a helical membrane-spanning segment; sequence FFHLISSLAETFTFIYMGFDI. The Cytoplasmic segment spans residues 332–340; that stretch reads AMEQHSWSH. Residues 341–361 traverse the membrane as a helical segment; the sequence is VGFILFSILFIGVARAVNVFG. Over 362 to 382 the chain is Lumenal; the sequence is CAYLVNLFRQENQKIPMKHQK. The helical transmembrane segment at 383–402 threads the bilayer; the sequence is ALWYSGLRGAMAFALALQSL. At 403–411 the chain is on the cytoplasmic side; the sequence is HDLPEGHGQ. The chain crosses the membrane as a helical span at residues 412 to 432; sequence IIFTATTTIVVVTVLLIGGST. The Lumenal segment spans residues 433–521; that stretch reads GKMLEALEVV…NSGDGDGDGE (89 aa). Residues 453 to 480 form a disordered region; the sequence is GFEESDHQYVPPPFSIGASSDEDTSSSG. Residues 467 to 480 are compositionally biased toward low complexity; the sequence is SIGASSDEDTSSSG.

Belongs to the monovalent cation:proton antiporter 1 (CPA1) transporter (TC 2.A.36) family. As to expression, expressed in roots, leaves, stems, flowers and siliques. Detected at low levels in roots and shoots.

Its subcellular location is the endosome membrane. It localises to the golgi apparatus. The protein resides in the trans-Golgi network membrane. It is found in the golgi stack membrane. It catalyses the reaction Na(+)(in) + H(+)(out) = Na(+)(out) + H(+)(in). It carries out the reaction K(+)(in) + H(+)(out) = K(+)(out) + H(+)(in). Involved in trafficking to the vacuole. Required for cell proliferation and cell expansion, but not for cell differentiation. Acts in low affinity electroneutral exchange of protons for cations such as Na(+) or K(+) across membranes. May also exchange Li(+) and Cs(+) with a lower affinity. The chain is Sodium/hydrogen exchanger 5 (NHX5) from Arabidopsis thaliana (Mouse-ear cress).